Reading from the N-terminus, the 86-residue chain is Antifungal protein 2 (86 aa).

The first 21 residues, 1–21 (MHLSTALFSAIALLAATQVIG), serve as a signal peptide directing secretion. 3 disulfide bridges follow: C43-C57, C45-C74, and C49-C83. Positions 44-54 (NCPNNCKHKKG) are lipid-binding. The short motif at 72–83 (GKCEWQGGQLNC) is the Gamma-core element.

It is found in the secreted. Functionally, cysteine-rich antifungal protein highly effective against yeasts such as clinically relevant Candida species, including the multidrug-resistant pathogen Candida auris. Does not cause metabolic inactivity and apoptosis induction, but the fungal cell-killing activity is connected to its pore-forming ability in the cell membrane. NFAP2 has a low potential to trigger resistance in C.albicans in vitro, and the developed tolerance to NFAP2 is not associated with severe phenotypic changes compared with development of resistance to generic fluconazole. This chain is Antifungal protein 2, found in Neosartorya fischeri (strain ATCC 1020 / DSM 3700 / CBS 544.65 / FGSC A1164 / JCM 1740 / NRRL 181 / WB 181) (Aspergillus fischerianus).